A 243-amino-acid polypeptide reads, in one-letter code: Adenosine 5'-phosphosulfate reductase (243 aa).

It belongs to the PAPS reductase family. CysH subfamily. [4Fe-4S] cluster serves as cofactor.

The protein localises to the cytoplasm. It catalyses the reaction [thioredoxin]-disulfide + sulfite + AMP + 2 H(+) = adenosine 5'-phosphosulfate + [thioredoxin]-dithiol. It functions in the pathway sulfur metabolism; hydrogen sulfide biosynthesis; sulfite from sulfate. Catalyzes the formation of sulfite from adenosine 5'-phosphosulfate (APS) using thioredoxin as an electron donor. In Staphylococcus haemolyticus (strain JCSC1435), this protein is Adenosine 5'-phosphosulfate reductase.